The following is a 449-amino-acid chain: UDP-N-acetylmuramate--L-alanine ligase (449 aa).

An ATP-binding site is contributed by 118-124 (GTHGKTT).

It belongs to the MurCDEF family.

Its subcellular location is the cytoplasm. It carries out the reaction UDP-N-acetyl-alpha-D-muramate + L-alanine + ATP = UDP-N-acetyl-alpha-D-muramoyl-L-alanine + ADP + phosphate + H(+). Its pathway is cell wall biogenesis; peptidoglycan biosynthesis. Cell wall formation. This is UDP-N-acetylmuramate--L-alanine ligase from Flavobacterium johnsoniae (strain ATCC 17061 / DSM 2064 / JCM 8514 / BCRC 14874 / CCUG 350202 / NBRC 14942 / NCIMB 11054 / UW101) (Cytophaga johnsonae).